The primary structure comprises 420 residues: S-adenosylmethionine synthase (420 aa).

His-16 is a binding site for ATP. Residue Asp-18 coordinates Mg(2+). K(+) is bound at residue Glu-44. Residues Glu-57 and Gln-100 each coordinate L-methionine. Residues 100 to 110 (QSADIAQGVDK) are flexible loop. ATP contacts are provided by residues 175-177 (DGK), 251-252 (KF), Asp-260, 266-267 (RK), Ala-283, and Lys-287. Asp-260 is an L-methionine binding site. Lys-291 contributes to the L-methionine binding site.

This sequence belongs to the AdoMet synthase family. As to quaternary structure, homotetramer; dimer of dimers. Requires Mg(2+) as cofactor. It depends on K(+) as a cofactor.

Its subcellular location is the cytoplasm. It carries out the reaction L-methionine + ATP + H2O = S-adenosyl-L-methionine + phosphate + diphosphate. It functions in the pathway amino-acid biosynthesis; S-adenosyl-L-methionine biosynthesis; S-adenosyl-L-methionine from L-methionine: step 1/1. In terms of biological role, catalyzes the formation of S-adenosylmethionine (AdoMet) from methionine and ATP. The overall synthetic reaction is composed of two sequential steps, AdoMet formation and the subsequent tripolyphosphate hydrolysis which occurs prior to release of AdoMet from the enzyme. The polypeptide is S-adenosylmethionine synthase (Trichodesmium erythraeum (strain IMS101)).